A 162-amino-acid polypeptide reads, in one-letter code: Selenoprotein F (162 aa).

The signal sequence occupies residues 1-28 (MAAGQGGWLRPALGLRLLLATAFQAVSA). Selenocysteine 93 is a non-standard amino acid (selenocysteine).

The protein belongs to the selenoprotein M/F family. Forms a tight complex with UGGT1/UGCGL1. Interacts with UGGT2/UGCGL2. Interacts with RDH11.

The protein localises to the endoplasmic reticulum lumen. Functionally, may be involved in redox reactions associated with the formation of disulfide bonds. May contribute to the quality control of protein folding in the endoplasmic reticulum. May regulate protein folding by enhancing the catalytic activity of UGGT1/UGCGL1 and UGGT2/UGCGL2. In Mus musculus (Mouse), this protein is Selenoprotein F.